Consider the following 117-residue polypeptide: Immunoglobulin lambda variable 7-43 (117 aa).

An N-terminal signal peptide occupies residues 1-19 (MAWTPLFLFLLTCCPGSNS). The tract at residues 20–44 (QTVVTQEPSLTVSPGGTVTLTCASS) is framework-1. Positions 20–117 (QTVVTQEPSL…YCLLYYGGAQ (98 aa)) constitute an Ig-like domain. A disulfide bridge connects residues Cys-41 and Cys-109. Residues 45–53 (TGAVTSGYY) form a complementarity-determining-1 region. The interval 54-70 (PNWFQQKPGQAPRALIY) is framework-2. The tract at residues 71-73 (STS) is complementarity-determining-2. The interval 74 to 109 (NKHSWTPARFSGSLLGGKAALTLSGVQPEDEAEYYC) is framework-3. The segment at 110-117 (LLYYGGAQ) is complementarity-determining-3.

As to quaternary structure, immunoglobulins are composed of two identical heavy chains and two identical light chains; disulfide-linked.

Its subcellular location is the secreted. It is found in the cell membrane. V region of the variable domain of immunoglobulin light chains that participates in the antigen recognition. Immunoglobulins, also known as antibodies, are membrane-bound or secreted glycoproteins produced by B lymphocytes. In the recognition phase of humoral immunity, the membrane-bound immunoglobulins serve as receptors which, upon binding of a specific antigen, trigger the clonal expansion and differentiation of B lymphocytes into immunoglobulins-secreting plasma cells. Secreted immunoglobulins mediate the effector phase of humoral immunity, which results in the elimination of bound antigens. The antigen binding site is formed by the variable domain of one heavy chain, together with that of its associated light chain. Thus, each immunoglobulin has two antigen binding sites with remarkable affinity for a particular antigen. The variable domains are assembled by a process called V-(D)-J rearrangement and can then be subjected to somatic hypermutations which, after exposure to antigen and selection, allow affinity maturation for a particular antigen. This is Immunoglobulin lambda variable 7-43 from Homo sapiens (Human).